The primary structure comprises 285 residues: Pantothenate synthetase (285 aa).

30-37 is an ATP binding site; sequence MGFLHEGH. His-37 acts as the Proton donor in catalysis. (R)-pantoate is bound at residue Gln-61. Gln-61 contributes to the beta-alanine binding site. Position 147 to 150 (147 to 150) interacts with ATP; it reads GQKD. (R)-pantoate is bound at residue Gln-153. ATP-binding positions include Val-176 and 184–187; that span reads KSSR.

It belongs to the pantothenate synthetase family. In terms of assembly, homodimer.

It is found in the cytoplasm. The enzyme catalyses (R)-pantoate + beta-alanine + ATP = (R)-pantothenate + AMP + diphosphate + H(+). The protein operates within cofactor biosynthesis; (R)-pantothenate biosynthesis; (R)-pantothenate from (R)-pantoate and beta-alanine: step 1/1. Its function is as follows. Catalyzes the condensation of pantoate with beta-alanine in an ATP-dependent reaction via a pantoyl-adenylate intermediate. The polypeptide is Pantothenate synthetase (Listeria monocytogenes serotype 4b (strain F2365)).